The primary structure comprises 409 residues: AT-rich interactive domain-containing protein 3C (409 aa).

Positions 1 to 14 (MEALQRQQAARLAQ) are enriched in low complexity. Residues 1-91 (MEALQRQQAA…SPSSQSPGIQ (91 aa)) form a disordered region. A compositionally biased stretch (pro residues) spans 19–30 (LAPPRLPLPQPP). Residues 49-70 (AEEEEGAEDEEGETPLAEEETA) are compositionally biased toward acidic residues. Residues 110–202 (DPKRKEFLDD…YLYPYECETR (93 aa)) form the ARID domain. 3 disordered regions span residues 233–274 (NLAG…PAHA), 306–333 (TREK…RLGA), and 385–409 (PVPA…STLP). Residues 235–257 (AGPTPRGAPGPASSHGPAPTATP) show a composition bias toward low complexity. The REKLES domain maps to 301–386 (LASEATREKL…GILFARRQPV (86 aa)). The span at 306–320 (TREKLAPEEPPEKRA) shows a compositional bias: basic and acidic residues. Over residues 393–402 (TNPPPLPSTG) the composition is skewed to pro residues.

As to quaternary structure, interacts (via REKLES DOMAIN) with NPM1; the interaction mediates ARID3C nuclear shuttling.

The protein localises to the nucleus. Functionally, transcription factor involved in monocyte-to-macrophage differentiation. Forms a complex with NPM1 to translocate to the nucleus, acting as a transcription factor that promotes the expression of the genes involved in macrophage differentiation, such as STAT3, STAT1 and JUNB. The polypeptide is AT-rich interactive domain-containing protein 3C (Arid3c) (Mus musculus (Mouse)).